The chain runs to 125 residues: Large ribosomal subunit protein uL18 (125 aa).

N-acetylglycine is present on Gly-2. N6-acetyllysine is present on residues Lys-5 and Lys-48.

This sequence belongs to the universal ribosomal protein uL18 family. As to quaternary structure, component of the large ribosomal subunit (LSU). Part of the 5S RNP complex, which is a LSU subcomplex composed of the 5S RNA, RPL5 and RPL11. Component of a hexameric 5S RNP precursor complex, composed of 5S RNA, RRS1, RPF2/BXDC1, RPL5, RPL11 and HEATR3; this complex acts as a precursor for ribosome assembly. Interacts with NVL in an ATP-dependent manner. Interacts with RRP1B. Interacts with IPO5, IPO7 and KPNB1; these interactions may be involved in RPL5 nuclear import for the assembly of ribosomal subunits. Interacts with RRP1B.

The protein localises to the cytoplasm. It localises to the nucleus. Its subcellular location is the nucleolus. Its function is as follows. Component of the ribosome, a large ribonucleoprotein complex responsible for the synthesis of proteins in the cell. The small ribosomal subunit (SSU) binds messenger RNAs (mRNAs) and translates the encoded message by selecting cognate aminoacyl-transfer RNA (tRNA) molecules. The large subunit (LSU) contains the ribosomal catalytic site termed the peptidyl transferase center (PTC), which catalyzes the formation of peptide bonds, thereby polymerizing the amino acids delivered by tRNAs into a polypeptide chain. The nascent polypeptides leave the ribosome through a tunnel in the LSU and interact with protein factors that function in enzymatic processing, targeting, and the membrane insertion of nascent chains at the exit of the ribosomal tunnel. As part of the 5S RNP/5S ribonucleoprotein particle it is an essential component of the LSU, required for its formation and the maturation of rRNAs. It also couples ribosome biogenesis to p53/TP53 activation. As part of the 5S RNP it accumulates in the nucleoplasm and inhibits MDM2, when ribosome biogenesis is perturbed, mediating the stabilization and the activation of TP53. This Sus scrofa (Pig) protein is Large ribosomal subunit protein uL18 (RPL5).